A 239-amino-acid chain; its full sequence is Orotidine 5'-phosphate decarboxylase (239 aa).

Residues aspartate 15, lysine 37, 64-73 (DLKFHDIPNT), threonine 126, arginine 187, glutamine 196, glycine 216, and arginine 217 each bind substrate. Lysine 66 serves as the catalytic Proton donor.

This sequence belongs to the OMP decarboxylase family. Type 1 subfamily. In terms of assembly, homodimer.

The catalysed reaction is orotidine 5'-phosphate + H(+) = UMP + CO2. It functions in the pathway pyrimidine metabolism; UMP biosynthesis via de novo pathway; UMP from orotate: step 2/2. Its function is as follows. Catalyzes the decarboxylation of orotidine 5'-monophosphate (OMP) to uridine 5'-monophosphate (UMP). This Geobacter sulfurreducens (strain ATCC 51573 / DSM 12127 / PCA) protein is Orotidine 5'-phosphate decarboxylase.